The following is a 30-amino-acid chain: Ribosome-inactivating protein momorcochin-S (30 aa).

It belongs to the ribosome-inactivating protein family. Type 1 RIP subfamily. Post-translationally, glycosylated.

It catalyses the reaction Endohydrolysis of the N-glycosidic bond at one specific adenosine on the 28S rRNA.. Functionally, inactivates eukaryotic 60S ribosomal subunits. This is Ribosome-inactivating protein momorcochin-S from Momordica cochinchinensis (Spiny bitter cucumber).